The sequence spans 197 residues: Rac-like GTP-binding protein RHO1 (197 aa).

Gly13 to Thr20 lines the GTP pocket. The Effector region motif lies at Tyr35–Phe43. GTP contacts are provided by residues Asp60 to Gln64 and Thr118 to Asp121. Position 194 is a cysteine methyl ester (Cys194). Residue Cys194 is the site of S-geranylgeranyl cysteine attachment. The propeptide at Ser195–Leu197 is removed in mature form.

This sequence belongs to the small GTPase superfamily. Rho family.

The protein localises to the cytoplasm. It is found in the membrane. Its function is as follows. Inactive GDP-bound Rho GTPases reside in the cytosol, are found in a complex with Rho GDP-dissociation inhibitors (Rho GDIs), and are released from the GDI protein in order to translocate to membranes upon activation. This chain is Rac-like GTP-binding protein RHO1 (RHO1), found in Beta vulgaris (Sugar beet).